The chain runs to 285 residues: MASLRDIKQRINSTKKTKQITKAMEMVSAAKLNRSQEKAQSFLPYTDKIREVVASIAASDTDVSHPMLEERPVKKTGYIVITSDRGLAGAYNSNLIRGLLYTINKRHKSKDEYGIFAIGRTGRDLLKKRQLPIISEMTGLSDQPTFNDIKDIAKQTVDMFADEVFDELYIWYNHFVSPIKQDVTEKKVLPLTDLSDTKVSTTYEYEPNEQVILEALLPQYAESLVYGALLDAKASEFAARMTAMSAATDNATNLIDELTLSYNRARQAAITQEITEIVGGAAALE.

This sequence belongs to the ATPase gamma chain family. F-type ATPases have 2 components, CF(1) - the catalytic core - and CF(0) - the membrane proton channel. CF(1) has five subunits: alpha(3), beta(3), gamma(1), delta(1), epsilon(1). CF(0) has three main subunits: a, b and c.

It localises to the cell membrane. Produces ATP from ADP in the presence of a proton gradient across the membrane. The gamma chain is believed to be important in regulating ATPase activity and the flow of protons through the CF(0) complex. This chain is ATP synthase gamma chain, found in Halalkalibacterium halodurans (strain ATCC BAA-125 / DSM 18197 / FERM 7344 / JCM 9153 / C-125) (Bacillus halodurans).